Reading from the N-terminus, the 280-residue chain is Antiactivator FleN (280 aa).

ATP contacts are provided by residues 19–26 (KGGVGKTN), Glu153, Asn181, 215–217 (PYD), and Arg221.

This sequence belongs to the ParA family. In terms of assembly, forms homodimers. Interacts with FleQ.

ATP-binding allows dimerization and subsequent antagonistic effect against FleQ. Its function is as follows. ATPase that plays an important role in maintaining flagellar number in Pseudomonas aeruginosa. Exhibits anti-activator activity against FleQ, the global transcriptional regulator of flagellar genes. The polypeptide is Antiactivator FleN (Pseudomonas aeruginosa (strain ATCC 15692 / DSM 22644 / CIP 104116 / JCM 14847 / LMG 12228 / 1C / PRS 101 / PAO1)).